Here is a 453-residue protein sequence, read N- to C-terminus: Signal transduction histidine-protein kinase ArlS (453 aa).

Transmembrane regions (helical) follow at residues 14-34 (ITTL…IFFL) and 157-177 (FVAI…SYIF). The region spanning 179–232 (TQLTKPLVTMSNKMIQIRRDGFQNKLELKTNYEETDNLIDTFNDMMYQIEESFN) is the HAMP domain. One can recognise a Histidine kinase domain in the interval 240–453 (DASHELRTPL…QYTTFKIIFK (214 aa)). His243 is subject to Phosphohistidine; by autocatalysis.

In terms of processing, autophosphorylated.

It localises to the cell membrane. It catalyses the reaction ATP + protein L-histidine = ADP + protein N-phospho-L-histidine.. Functionally, member of the two-component regulatory system ArlS/ArlR. ArlS probably functions as a sensor protein kinase which is autophosphorylated at a histidine residue and transfers its phosphate group to ArlR. The sequence is that of Signal transduction histidine-protein kinase ArlS (arlS) from Staphylococcus haemolyticus (strain JCSC1435).